The primary structure comprises 297 residues: Probable endonuclease 4 (297 aa).

Zn(2+) is bound by residues His-69, His-110, Glu-145, Asp-179, His-182, His-214, Asp-227, His-229, and Glu-259.

The protein belongs to the AP endonuclease 2 family. Requires Zn(2+) as cofactor.

It catalyses the reaction Endonucleolytic cleavage to 5'-phosphooligonucleotide end-products.. Functionally, endonuclease IV plays a role in DNA repair. It cleaves phosphodiester bonds at apurinic or apyrimidinic (AP) sites, generating a 3'-hydroxyl group and a 5'-terminal sugar phosphate. This chain is Probable endonuclease 4, found in Listeria monocytogenes serotype 4b (strain CLIP80459).